The chain runs to 1083 residues: Error-prone DNA polymerase (1083 aa).

This sequence belongs to the DNA polymerase type-C family. DnaE2 subfamily.

Its subcellular location is the cytoplasm. The catalysed reaction is DNA(n) + a 2'-deoxyribonucleoside 5'-triphosphate = DNA(n+1) + diphosphate. DNA polymerase involved in damage-induced mutagenesis and translesion synthesis (TLS). It is not the major replicative DNA polymerase. The sequence is that of Error-prone DNA polymerase from Xanthomonas axonopodis pv. citri (strain 306).